Consider the following 1070-residue polypeptide: DNA-directed RNA polymerase subunit beta (1070 aa).

This sequence belongs to the RNA polymerase beta chain family. As to quaternary structure, in plastids the minimal PEP RNA polymerase catalytic core is composed of four subunits: alpha, beta, beta', and beta''. When a (nuclear-encoded) sigma factor is associated with the core the holoenzyme is formed, which can initiate transcription.

It is found in the plastid. The protein resides in the chloroplast. The catalysed reaction is RNA(n) + a ribonucleoside 5'-triphosphate = RNA(n+1) + diphosphate. Functionally, DNA-dependent RNA polymerase catalyzes the transcription of DNA into RNA using the four ribonucleoside triphosphates as substrates. In Gossypium barbadense (Sea Island cotton), this protein is DNA-directed RNA polymerase subunit beta.